The sequence spans 165 residues: ATP synthase subunit b (165 aa).

The helical transmembrane segment at 7 to 27 threads the bilayer; the sequence is GTSLGNLLIVTGSFILLLLLV.

It belongs to the ATPase B chain family. In terms of assembly, F-type ATPases have 2 components, F(1) - the catalytic core - and F(0) - the membrane proton channel. F(1) has five subunits: alpha(3), beta(3), gamma(1), delta(1), epsilon(1). F(0) has three main subunits: a(1), b(2) and c(10-14). The alpha and beta chains form an alternating ring which encloses part of the gamma chain. F(1) is attached to F(0) by a central stalk formed by the gamma and epsilon chains, while a peripheral stalk is formed by the delta and b chains.

The protein localises to the cell membrane. Functionally, f(1)F(0) ATP synthase produces ATP from ADP in the presence of a proton or sodium gradient. F-type ATPases consist of two structural domains, F(1) containing the extramembraneous catalytic core and F(0) containing the membrane proton channel, linked together by a central stalk and a peripheral stalk. During catalysis, ATP synthesis in the catalytic domain of F(1) is coupled via a rotary mechanism of the central stalk subunits to proton translocation. In terms of biological role, component of the F(0) channel, it forms part of the peripheral stalk, linking F(1) to F(0). This chain is ATP synthase subunit b, found in Streptococcus mutans serotype c (strain ATCC 700610 / UA159).